A 159-amino-acid polypeptide reads, in one-letter code: Large ribosomal subunit protein eL24 (159 aa).

Residues 118–159 (ANKAVRAAKAAANKEKKASQPKTQQKTAKNVKTAAPRVGGKR) form a disordered region. Over residues 137 to 147 (QPKTQQKTAKN) the composition is skewed to polar residues.

The protein belongs to the eukaryotic ribosomal protein eL24 family.

The sequence is that of Large ribosomal subunit protein eL24 from Caenorhabditis elegans.